The chain runs to 406 residues: Tyrosine--tRNA ligase (406 aa).

Residue Tyr35 participates in L-tyrosine binding. The short motif at 40–49 is the 'HIGH' region element; sequence PTADSLHVGH. Positions 168 and 172 each coordinate L-tyrosine. The 'KMSKS' region signature appears at 228–232; the sequence is KMGKT. Position 231 (Lys231) interacts with ATP. Residues 340–404 form the S4 RNA-binding domain; sequence SELLDILVEA…RGKKNYNKIV (65 aa).

Belongs to the class-I aminoacyl-tRNA synthetase family. TyrS type 1 subfamily. Homodimer.

It is found in the cytoplasm. It catalyses the reaction tRNA(Tyr) + L-tyrosine + ATP = L-tyrosyl-tRNA(Tyr) + AMP + diphosphate + H(+). Its function is as follows. Catalyzes the attachment of tyrosine to tRNA(Tyr) in a two-step reaction: tyrosine is first activated by ATP to form Tyr-AMP and then transferred to the acceptor end of tRNA(Tyr). The protein is Tyrosine--tRNA ligase of Clostridium perfringens (strain SM101 / Type A).